The following is an 87-amino-acid chain: Small ribosomal subunit protein bS20 (87 aa).

Belongs to the bacterial ribosomal protein bS20 family.

In terms of biological role, binds directly to 16S ribosomal RNA. The sequence is that of Small ribosomal subunit protein bS20 from Clostridium botulinum (strain Alaska E43 / Type E3).